The primary structure comprises 462 residues: Arginine-specific demethylase JMJ20 (462 aa).

One can recognise a JmjC domain in the interval 115–287 (VKEYPDYTAY…WVWDLLWKDY (173 aa)). H177, D179, and H255 together coordinate Fe cation.

The protein belongs to the JARID1 histone demethylase family. Requires Fe(2+) as cofactor. In terms of tissue distribution, mostly expressed in leaves, and, to a lower extent, in inflorescences, roots, siliques and stems.

It localises to the nucleus. It catalyses the reaction N(omega),N(omega)-dimethyl-L-arginyl-[protein] + 2-oxoglutarate + O2 = N(omega)-methyl-L-arginyl-[protein] + formaldehyde + succinate + CO2. Functionally, histone demethylase that demethylates 'Arg-3' (H4R3me) of histone H4 with a specific activity for H4R3me2. Involved in the positive regulation of gene expression. Together with JMJ22, positively regulates seed germination by promoting the removal of repressive histone arginine methylations (e.g. H4R3me2) at GA3ox1 and GA3ox2 to trigger gibberellic acid (GA) biosynthesis. The protein is Arginine-specific demethylase JMJ20 of Arabidopsis thaliana (Mouse-ear cress).